The primary structure comprises 82 residues: MNENLWAAPAPKKLSKHFFGRGGPLGKETGPNLFPKKPGAGKGLGFPPTKKPRGQPRVLKKPKWNSEGLIGILHRGSDGVQF.

Residues 1 to 17 (MNENLWAAPAPKKLSKH) form the signal peptide. The disordered stretch occupies residues 16–60 (KHFFGRGGPLGKETGPNLFPKKPGAGKGLGFPPTKKPRGQPRVLK). Positions 38-82 (PGAGKGLGFPPTKKPRGQPRVLKKPKWNSEGLIGILHRGSDGVQF) are excised as a propeptide. A compositionally biased stretch (basic residues) spans 50 to 60 (KKPRGQPRVLK).

Belongs to the non-disulfide-bridged peptide (NDBP) superfamily. Short antimicrobial peptide (group 4) family. In terms of tissue distribution, expressed by the venom gland.

The protein resides in the secreted. This chain is Putative antimicrobial peptide 7848, found in Urodacus yaschenkoi (Inland robust scorpion).